The following is a 349-amino-acid chain: tRNA pseudouridine synthase D (349 aa).

Residue Phe27 coordinates substrate. The active-site Nucleophile is Asp80. Asn129 contacts substrate. One can recognise a TRUD domain in the interval 155 to 303 (GVPNYFGAQR…VEAARRAMLL (149 aa)). Phe329 serves as a coordination point for substrate.

This sequence belongs to the pseudouridine synthase TruD family.

It carries out the reaction uridine(13) in tRNA = pseudouridine(13) in tRNA. In terms of biological role, responsible for synthesis of pseudouridine from uracil-13 in transfer RNAs. The chain is tRNA pseudouridine synthase D from Escherichia coli O9:H4 (strain HS).